The primary structure comprises 327 residues: Probable cell division protein WhiA (327 aa).

The segment at residues 275-308 (SLEELGRLADPQMTKDAVAGRIRRLLTMADKRAE) is a DNA-binding region (H-T-H motif).

The protein belongs to the WhiA family.

Its function is as follows. Involved in cell division and chromosome segregation. This is Probable cell division protein WhiA from Corynebacterium glutamicum (strain ATCC 13032 / DSM 20300 / JCM 1318 / BCRC 11384 / CCUG 27702 / LMG 3730 / NBRC 12168 / NCIMB 10025 / NRRL B-2784 / 534).